A 328-amino-acid chain; its full sequence is Protein FAM76B (328 aa).

Residues 143–232 (KEQRKGLGSS…ITQSMDSGGT (90 aa)) are disordered. Residues 148-159 (GLGSSHSNSSSL) are compositionally biased toward low complexity. The span at 165-183 (QRHHHHHQHHRHGSSHHKI) shows a compositional bias: basic residues. Residues 185 to 201 (GNLSPEQDQGLWKQSIQ) show a composition bias toward polar residues. The residue at position 188 (serine 188) is a Phosphoserine. The span at 203 to 213 (ETPKKKPKLET) shows a compositional bias: basic and acidic residues. Residues 216–232 (SNGDSSSITQSMDSGGT) are compositionally biased toward polar residues. Residues 237-316 (LISQLKEEVM…KQVAALSKGK (80 aa)) are a coiled coil.

The protein belongs to the FAM76 family. As to expression, highly expressed in hematopoietic and immune systems including in the thymus, spleen, kidney, and blood vessel.

Its function is as follows. Plays a role in hematopoiesis and immune system development, and participates in the inflammatory response. This chain is Protein FAM76B (fam76b), found in Danio rerio (Zebrafish).